Here is a 274-residue protein sequence, read N- to C-terminus: Large ribosomal subunit protein uL2 (274 aa).

Disordered stretches follow at residues 37-60 and 224-252; these read QHQK…GHKH and AMNP…WGNL. Positions 50 to 60 are enriched in basic residues; sequence TTRHKGGGHKH. A compositionally biased stretch (basic and acidic residues) spans 229-246; the sequence is DHPHGGGEGRTGEGRHAV.

It belongs to the universal ribosomal protein uL2 family. As to quaternary structure, part of the 50S ribosomal subunit. Forms a bridge to the 30S subunit in the 70S ribosome.

Its function is as follows. One of the primary rRNA binding proteins. Required for association of the 30S and 50S subunits to form the 70S ribosome, for tRNA binding and peptide bond formation. It has been suggested to have peptidyltransferase activity; this is somewhat controversial. Makes several contacts with the 16S rRNA in the 70S ribosome. This Paracidovorax citrulli (strain AAC00-1) (Acidovorax citrulli) protein is Large ribosomal subunit protein uL2.